A 330-amino-acid polypeptide reads, in one-letter code: Ribose operon repressor (330 aa).

The region spanning 2–56 is the HTH lacI-type domain; that stretch reads ATMKDVARLAGVSTSTVSHVINKDRFVSEAITAKVEAAIKELNYAPSALARSLKL. Residues 4-23 constitute a DNA-binding region (H-T-H motif); it reads MKDVARLAGVSTSTVSHVIN.

In terms of biological role, transcriptional repressor for the ribose rbsDACBK operon. RbsR binds to a region of perfect dyad symmetry spanning the rbs operon transcriptional start site. The affinity for the rbs operator is reduced by addition of ribose, consistent with ribose being the inducer of the operon. The protein is Ribose operon repressor (rbsR) of Escherichia coli O6:H1 (strain CFT073 / ATCC 700928 / UPEC).